We begin with the raw amino-acid sequence, 266 residues long: MTAIALSIAGSDSGGGAGIQADLKTFSALGVYGASVITAITAQNTRGVTAVEDVSAEIVSAQMDAVFSDLDVKAVKIGMVSRRETIAAIADGLRRFGKRAVVDPVMVATSGDALLRPDAVAALIEELLPLALVVTPNLAEAALMTGRAIAGDEAEMARQAEAIMRTGAHAVLVKGGHLKGQEATDLFFDGDTLVRLPAGRIETRNDHGTGCTLSAAIAAGLAKGVPLIEAVSAAKAYLHAAISAADRLEIGQGRGPVHHFHRWWKD.

Glutamine 43 lines the 4-amino-5-hydroxymethyl-2-methylpyrimidine pocket.

Belongs to the ThiD family.

It carries out the reaction 4-amino-5-hydroxymethyl-2-methylpyrimidine + ATP = 4-amino-2-methyl-5-(phosphooxymethyl)pyrimidine + ADP + H(+). It catalyses the reaction 4-amino-2-methyl-5-(phosphooxymethyl)pyrimidine + ATP = 4-amino-2-methyl-5-(diphosphooxymethyl)pyrimidine + ADP. It functions in the pathway cofactor biosynthesis; thiamine diphosphate biosynthesis; 4-amino-2-methyl-5-diphosphomethylpyrimidine from 5-amino-1-(5-phospho-D-ribosyl)imidazole: step 2/3. It participates in cofactor biosynthesis; thiamine diphosphate biosynthesis; 4-amino-2-methyl-5-diphosphomethylpyrimidine from 5-amino-1-(5-phospho-D-ribosyl)imidazole: step 3/3. Catalyzes the phosphorylation of hydroxymethylpyrimidine phosphate (HMP-P) to HMP-PP, and of HMP to HMP-P. The sequence is that of Hydroxymethylpyrimidine/phosphomethylpyrimidine kinase (thiD) from Rhizobium meliloti (strain 1021) (Ensifer meliloti).